A 364-amino-acid chain; its full sequence is Phenylalanine dehydrogenase (364 aa).

Arg62 serves as a coordination point for NAD(+). Lys86 is a binding site for L-phenylalanine. The active-site Proton donor/acceptor is the Lys98. NAD(+) contacts are provided by residues Asp133, Ser164, Thr168, 255-256 (AM), and 276-278 (AAN). Position 278 (Asn278) interacts with L-phenylalanine.

The protein belongs to the Glu/Leu/Phe/Val dehydrogenases family.

The catalysed reaction is L-phenylalanine + NAD(+) + H2O = 3-phenylpyruvate + NH4(+) + NADH + H(+). The protein operates within amino-acid biosynthesis; L-phenylalanine biosynthesis; L-phenylalanine from phenylpyruvate (PDH route): step 1/1. Catalyzes the reversible NAD(+)-dependent oxidative deamination of L-phenylalanine to phenylpyruvate. In Rhodococcus jostii (strain RHA1), this protein is Phenylalanine dehydrogenase.